A 227-amino-acid polypeptide reads, in one-letter code: MINQGPVITIDGPSGAGKGTVSQLIAEKLGWHILDSGALYRLLALAVSHHGMSSDDVETLKVLAEHLDIQFQQSEEGKVEIILEGEIVTQAIRTEEVGNCASKLAAIPEVREGLLLRQRAFSQSPGLVADGRDMGTVVFPSAQIKIFLTASAEERAQRRLQQLQQKGEAVNLGGLVKKIKERDERDANRAIAPLVPAAGALVIDSTNLTIEQVVEMIFAETAKAGLV.

12–20 is an ATP binding site; it reads GPSGAGKGT.

The protein belongs to the cytidylate kinase family. Type 1 subfamily.

Its subcellular location is the cytoplasm. It catalyses the reaction CMP + ATP = CDP + ADP. The catalysed reaction is dCMP + ATP = dCDP + ADP. This Marinomonas sp. (strain MWYL1) protein is Cytidylate kinase.